The primary structure comprises 745 residues: Cysteine protease atg4 (745 aa).

3 stretches are compositionally biased toward low complexity: residues 29–42 (QQSYLRQQQQAPQQ), 52–64 (SPTSSSSTPSSST), and 194–215 (NNNSNSNNNNNHNNNHNNNNNN). Disordered regions lie at residues 29–68 (QQSYLRQQQQAPQQISYGFNQPNSPTSSSSTPSSSTAMGN) and 192–215 (FQNNNSNSNNNNNHNNNHNNNNNN). Cysteine 262 functions as the Nucleophile in the catalytic mechanism. Disordered regions lie at residues 344–363 (LNRGGGGSSKGKKKKEKEEE) and 439–480 (QNNN…NGYN). The segment covering 439-477 (QNNNKNNNNNNPTTTTTTTTTATSSNNNNNQSPPSRVPN) has biased composition (low complexity). Residues aspartate 562 and histidine 564 contribute to the active site. Residues 686 to 745 (HIPYNPNNNQNNNQNNNNNNNKNNNNNTNQQQTPNYPPKLNTYQPDFSSDGEIDDFTMVG) are disordered. Residues 688 to 719 (PYNPNNNQNNNQNNNNNNNKNNNNNTNQQQTP) are compositionally biased toward low complexity. The segment covering 734 to 745 (SDGEIDDFTMVG) has biased composition (acidic residues).

Belongs to the peptidase C54 family.

The protein localises to the cytoplasm. It catalyses the reaction [protein]-C-terminal L-amino acid-glycyl-phosphatidylethanolamide + H2O = [protein]-C-terminal L-amino acid-glycine + a 1,2-diacyl-sn-glycero-3-phosphoethanolamine. Functionally, cysteine protease that plays a key role in autophagy by mediating both proteolytic activation and delipidation of ATG8 family proteins. The protease activity is required for proteolytic activation of ATG8 family proteins: cleaves the C-terminal amino acid of ATG8 proteins to reveal a C-terminal glycine. Exposure of the glycine at the C-terminus is essential for ATG8 proteins conjugation to phosphatidylethanolamine (PE) and insertion to membranes, which is necessary for autophagy. In addition to the protease activity, also mediates delipidation of PE-conjugated ATG8 proteins. This Dictyostelium discoideum (Social amoeba) protein is Cysteine protease atg4 (atg4-1).